The sequence spans 172 residues: Large ribosomal subunit protein uL10 (172 aa).

It belongs to the universal ribosomal protein uL10 family. In terms of assembly, part of the ribosomal stalk of the 50S ribosomal subunit. The N-terminus interacts with L11 and the large rRNA to form the base of the stalk. The C-terminus forms an elongated spine to which L12 dimers bind in a sequential fashion forming a multimeric L10(L12)X complex.

Its function is as follows. Forms part of the ribosomal stalk, playing a central role in the interaction of the ribosome with GTP-bound translation factors. This chain is Large ribosomal subunit protein uL10 (rplJ), found in Caulobacter vibrioides (strain ATCC 19089 / CIP 103742 / CB 15) (Caulobacter crescentus).